The chain runs to 122 residues: MIKLRLKRFGKKREASFRLVACNSTSRRDGRPLQELGFYNPRTKETRLDTEALRLRLSQGAQPTDAVRSLLEKGGLIEKTVRPAEVVGKAKQAEARKAGAKNVAKQAAEAKAEETPADNTEA.

The interval 87–122 (VGKAKQAEARKAGAKNVAKQAAEAKAEETPADNTEA) is disordered.

This sequence belongs to the bacterial ribosomal protein bS16 family.

The chain is Small ribosomal subunit protein bS16 from Prochlorococcus marinus (strain MIT 9303).